Reading from the N-terminus, the 699-residue chain is Elongation factor G (699 aa).

A tr-type G domain is found at 8–283 (EHIRNIGICA…AIVDFLPSPI (276 aa)). GTP contacts are provided by residues 17 to 24 (AHIDAGKT), 81 to 85 (DTPGH), and 135 to 138 (NKMD).

This sequence belongs to the TRAFAC class translation factor GTPase superfamily. Classic translation factor GTPase family. EF-G/EF-2 subfamily.

It is found in the cytoplasm. Its function is as follows. Catalyzes the GTP-dependent ribosomal translocation step during translation elongation. During this step, the ribosome changes from the pre-translocational (PRE) to the post-translocational (POST) state as the newly formed A-site-bound peptidyl-tRNA and P-site-bound deacylated tRNA move to the P and E sites, respectively. Catalyzes the coordinated movement of the two tRNA molecules, the mRNA and conformational changes in the ribosome. The chain is Elongation factor G from Rickettsia typhi (strain ATCC VR-144 / Wilmington).